Here is a 604-residue protein sequence, read N- to C-terminus: FAD-linked oxidoreductase easE (604 aa).

Positions 1–25 (MQFLLWSTGLVALLSWLIYTQETQS) are cleaved as a signal peptide. 4 N-linked (GlcNAc...) asparagine glycosylation sites follow: Asn-47, Asn-70, Asn-106, and Asn-196. Positions 125-308 (QGRIPLFTVG…TRATMRVFPD (184 aa)) constitute an FAD-binding PCMH-type domain.

This sequence belongs to the oxygen-dependent FAD-linked oxidoreductase family. Requires FAD as cofactor.

It participates in alkaloid biosynthesis; ergot alkaloid biosynthesis. Functionally, FAD-linked oxidoreductase; part of the gene cluster that mediates the biosynthesis of fungal ergot alkaloid. DmaW catalyzes the first step of ergot alkaloid biosynthesis by condensing dimethylallyl diphosphate (DMAP) and tryptophan to form 4-dimethylallyl-L-tryptophan. The second step is catalyzed by the methyltransferase easF that methylates 4-dimethylallyl-L-tryptophan in the presence of S-adenosyl-L-methionine, resulting in the formation of 4-dimethylallyl-L-abrine. The catalase easC and the FAD-dependent oxidoreductase easE then transform 4-dimethylallyl-L-abrine to chanoclavine-I which is further oxidized by easD in the presence of NAD(+), resulting in the formation of chanoclavine-I aldehyde. Chanoclavine-I aldehyde is the precursor of ergoamides and ergopeptines in Clavicipitaceae, and clavine-type alcaloids such as fumiclavine in Trichocomaceae. However, the metabolites downstream of chanoclavine-I aldehyde in Arthrodermataceae have not been identified yet. The polypeptide is FAD-linked oxidoreductase easE (Trichophyton verrucosum (strain HKI 0517)).